We begin with the raw amino-acid sequence, 300 residues long: HTH-type transcriptional activator NahR (300 aa).

Positions 6 to 63 (LDLNLLVVFNQLLVDRRVSITAENLGLTQPAVSNALKRLRTSLQDPLFVRTHQGMEPT) constitute an HTH lysR-type domain. The segment at residues 23–42 (VSITAENLGLTQPAVSNALK) is a DNA-binding region (H-T-H motif).

This sequence belongs to the LysR transcriptional regulatory family.

The protein resides in the cytoplasm. Its function is as follows. Regulates the expression of the naphthalene (nahA-F) and salicylate (nahG-M) metabolism genes. This chain is HTH-type transcriptional activator NahR (nahR), found in Pseudomonas putida (Arthrobacter siderocapsulatus).